The chain runs to 341 residues: Alpha-1,4-N-acetylglucosaminyltransferase (341 aa).

Topologically, residues 1-4 (MLKE) are cytoplasmic. A helical; Signal-anchor for type II membrane protein transmembrane segment spans residues 5-25 (IYLSLSLVLVFACGLLYQLTM). Over 26–341 (RSQCFFACLP…VSKKPGTGSR (316 aa)) the chain is Lumenal. A glycan (N-linked (GlcNAc...) asparagine) is linked at Asn-100. The DXD motif motif lies at 168 to 170 (DTD).

Belongs to the glycosyltransferase 32 family.

It localises to the golgi apparatus membrane. Its pathway is protein modification; protein glycosylation. In terms of biological role, catalyzes the transfer of N-acetylglucosamine (GlcNAc) to core 2 branched O-glycans. Necessary for the synthesis of type III mucin which is specifically produced in the stomach, duodenum, and pancreatic duct. May protect against inflammation-associated gastric adenocarcinoma. The polypeptide is Alpha-1,4-N-acetylglucosaminyltransferase (Mus musculus (Mouse)).